Reading from the N-terminus, the 97-residue chain is Large ribosomal subunit protein bL27 (97 aa).

Residues 1–12 (MIKLNLSNLQHF) constitute a propeptide that is removed on maturation. The segment at 13–38 (AHKKGGGSTSNGRDSQAKRLGAKAAD) is disordered.

It belongs to the bacterial ribosomal protein bL27 family. The N-terminus is cleaved by ribosomal processing cysteine protease Prp.

The polypeptide is Large ribosomal subunit protein bL27 (Streptococcus equi subsp. equi (strain 4047)).